The following is a 1237-amino-acid chain: Zinc finger protein ZFAT (1237 aa).

A C2H2-type 1 zinc finger spans residues 12–35; the sequence is FMCKCCNLFSPNQSELVTHVSEKH. The segment at 50–110 is disordered; sequence RPLNTPENPN…GPLATEEGSR (61 aa). Basic residues predominate over residues 70–81; it reads MKRKRGRPKGST. The segment at 116-141 adopts a C2H2-type 2; degenerate zinc-finger fold; sequence LECSKCCRKFSNTRQLRKHICIIVLN. The disordered stretch occupies residues 147–188; the sequence is GDAGNESDLDLEKTYKEDDREKASKRPRAQKTEKVQKISGKE. Positions 156–186 are enriched in basic and acidic residues; that stretch reads DLEKTYKEDDREKASKRPRAQKTEKVQKISG. C2H2-type zinc fingers lie at residues 271 to 293, 299 to 321, 326 to 349, 354 to 377, 404 to 426, 432 to 454, and 458 to 481; these read FTCEYCNKVFKFKHSLQAHLRIH, YKCSQCSYASAIKANLNVHLRKH, FACDYCSFTCLSKGHLKVHIERVH, QHCRFCKKKYSDVKNLIKHIRDMH, YDCHICERKFKNELDRDRHMLVH, FACELCGHGATKYQALELHVRKH, and YVCALCLKKFVSSIRLRSHIREVH. 20 residues coordinate Zn(2+): cysteine 273, cysteine 276, histidine 289, histidine 293, cysteine 301, cysteine 304, histidine 317, histidine 321, cysteine 328, cysteine 331, histidine 344, histidine 349, cysteine 356, cysteine 359, histidine 372, histidine 377, cysteine 406, cysteine 409, histidine 422, and histidine 426. Zn(2+)-binding residues include cysteine 460, cysteine 463, histidine 476, and histidine 481. 2 disordered regions span residues 551–576 and 601–671; these read VPGDAHAPPPGPLATPQSESSSLSPC and SDTS…CLRA. Residues 565–574 are compositionally biased toward polar residues; sequence TPQSESSSLS. The segment covering 601–617 has biased composition (low complexity); the sequence is SDTSSAEPPAAAEATSD. 4 consecutive C2H2-type zinc fingers follow at residues 737–759, 765–788, 793–817, and 825–848; these read LECEYCGKLFWYQVHFDMHVRTH, YYCSQCHYSSITKNCLKRHVIQKH, LKCPTDGCDYSTPDKYKLQAHLKVH, and YSCPVCEKSFSEDRLIKSHIKTNH. Residues cysteine 767, cysteine 770, histidine 783, histidine 788, cysteine 795, cysteine 800, histidine 813, histidine 817, cysteine 827, cysteine 830, histidine 843, histidine 848, cysteine 877, cysteine 880, histidine 894, histidine 898, cysteine 906, cysteine 909, histidine 922, histidine 926, cysteine 934, cysteine 937, histidine 950, and leucine 953 each contribute to the Zn(2+) site. A C2H2-type 14; degenerate zinc finger spans residues 875–898; it reads MKCPYCDFYFMKNGSDLQRHIWAH. 5 consecutive C2H2-type zinc fingers follow at residues 904–926, 932–954, 961–983, 989–1012, and 1036–1059; these read FKCSLCEYATRSKSNLKAHMNRH, HLCDMCGKKFKSKGTLKSHKLLH, FKCTVCDYTAAQKPQLLRHMEQH, FRCAHCHYSCNISGSLKRHYNRKH, and LKCPVCSFVYGTKWEFNRHLKNKH.

As to expression, detected in spleen and thymus but not in liver, muscle, heart, kidney, brain, bone marrow or pancreas. Expressed in CD19+, CD4+ and CD8+ lymphocytes but not in CD11b+ lymphocytes or peritoneal macrophages (at protein level).

It localises to the nucleus. It is found in the cytoplasm. The protein resides in the cytosol. In terms of biological role, may be involved in transcriptional regulation. Overexpression causes down-regulation of a number of genes involved in the immune response. Some genes are also up-regulated. In Mus musculus (Mouse), this protein is Zinc finger protein ZFAT (Zfat).